Consider the following 229-residue polypeptide: uncharacterized protein (229 aa).

The tract at residues 1 to 102 is disordered; sequence MKLLGRKKSY…AASKAQITDR (102 aa). Residues 73-94 show a composition bias toward basic residues; that stretch reads ARRKSLAPPKCHRAERRAKRAA. The next 2 helical transmembrane spans lie at 137–157 and 159–179; these read LGLF…VPQL and LYMS…GIIL.

It is found in the cell membrane. This is an uncharacterized protein from Mycobacterium leprae (strain TN).